The following is a 411-amino-acid chain: Dual specificity protein phosphatase Mpk3 (411 aa).

The Rhodanese domain occupies 22–149 (DSKDLILLDC…FRQAFPEWCE (128 aa)). Low complexity predominate over residues 184–197 (DSACSSSAESSDCE). The disordered stretch occupies residues 184–209 (DSACSSSAESSDCESSSHHHHHHSHH). One can recognise a Tyrosine-protein phosphatase domain in the interval 214 to 358 (APVEIIPGLL…LLSFESQLRL (145 aa)). The Phosphocysteine intermediate role is filled by cysteine 302.

The protein belongs to the protein-tyrosine phosphatase family. Non-receptor class dual specificity subfamily. Interacts (via N-terminal region) with phosphorylated rl. As to expression, ubiquitous expression in eye and wing imaginal disks. Enriched in ovary.

The protein localises to the cytoplasm. The enzyme catalyses O-phospho-L-tyrosyl-[protein] + H2O = L-tyrosyl-[protein] + phosphate. It carries out the reaction O-phospho-L-seryl-[protein] + H2O = L-seryl-[protein] + phosphate. The catalysed reaction is O-phospho-L-threonyl-[protein] + H2O = L-threonyl-[protein] + phosphate. With respect to regulation, activity abolished by tyrosine phosphatase inhibitor sodium vanadate. Activated by rl. Its function is as follows. Negatively regulates the activity of members of the MAP kinase family in response to changes in the cellular environment. Has a specificity for the ERK family. Acts as a negative regulator in a variety of developmental processes including cell differentiation and proliferation controlled by the Ras/ERK pathway. Suppresses the photoreceptor cell differentiation and wing vein formation. Required for proper oogenesis and early embryogenesis. Functions autonomously in a subset of photoreceptor progenitor cells in eye imaginal disks. Also appears to be required in surrounding non-neuronal cells for ommatidial patterning and photoreceptor differentiation. Plays a role in the maintenance of epithelial integrity during tracheal development. The sequence is that of Dual specificity protein phosphatase Mpk3 (Mkp3) from Drosophila melanogaster (Fruit fly).